A 452-amino-acid chain; its full sequence is 23S rRNA (uracil(1939)-C(5))-methyltransferase RlmD (452 aa).

Residues 1 to 23 (MSRKKSNGGLRFQPAGGNRATQI) are disordered. The TRAM domain maps to 22–80 (QIPVGKKQRLLIERVAGDGRGIAFIEGRTWFVSGALGGEEVEARVLGARGKVVEARLER). Residues cysteine 93, cysteine 99, cysteine 102, and cysteine 181 each contribute to the [4Fe-4S] cluster site. Glutamine 285, phenylalanine 314, asparagine 319, glutamate 335, aspartate 362, and aspartate 383 together coordinate S-adenosyl-L-methionine. The active-site Nucleophile is the cysteine 409.

It belongs to the class I-like SAM-binding methyltransferase superfamily. RNA M5U methyltransferase family. RlmD subfamily.

The enzyme catalyses uridine(1939) in 23S rRNA + S-adenosyl-L-methionine = 5-methyluridine(1939) in 23S rRNA + S-adenosyl-L-homocysteine + H(+). Functionally, catalyzes the formation of 5-methyl-uridine at position 1939 (m5U1939) in 23S rRNA. The polypeptide is 23S rRNA (uracil(1939)-C(5))-methyltransferase RlmD (Pseudomonas entomophila (strain L48)).